We begin with the raw amino-acid sequence, 122 residues long: Large ribosomal subunit protein uL14 (122 aa).

Belongs to the universal ribosomal protein uL14 family. Part of the 50S ribosomal subunit. Forms a cluster with proteins L3 and L19. In the 70S ribosome, L14 and L19 interact and together make contacts with the 16S rRNA in bridges B5 and B8.

In terms of biological role, binds to 23S rRNA. Forms part of two intersubunit bridges in the 70S ribosome. This is Large ribosomal subunit protein uL14 from Lactobacillus delbrueckii subsp. bulgaricus (strain ATCC 11842 / DSM 20081 / BCRC 10696 / JCM 1002 / NBRC 13953 / NCIMB 11778 / NCTC 12712 / WDCM 00102 / Lb 14).